We begin with the raw amino-acid sequence, 326 residues long: Macrosialin (326 aa).

Positions 1 to 20 (MRLPVCLILLGPLIAQGTEE) are cleaved as a signal peptide. A mucin-like region spans residues 21-109 (DCPHKKAVTL…ATSPRSSTVG (89 aa)). At 21–291 (DCPHKKAVTL…PCFSCNRDQS (271 aa)) the chain is on the extracellular side. Residues 38–58 (PTATESTASPTTSHRPTTTSH) show a composition bias toward low complexity. Positions 38–129 (PTATESTASP…SPRSKGALGN (92 aa)) are disordered. 4 tandem repeats follow at residues 44 to 49 (TASPTT), 50 to 64 (SHRP…VTVH), 65 to 72 (TSSGPTTV), and 73 to 88 (THNP…ATIS). Residues 59–69 (GNVTVHTSSGP) are compositionally biased toward polar residues. Asparagine 60 is a glycosylation site (N-linked (GlcNAc...) asparagine). Positions 70–80 (TTVTHNPATTT) are enriched in low complexity. Positions 81–108 (SHGNATISHATVSPTTNGTATSPRSSTV) are enriched in polar residues. 2 N-linked (GlcNAc...) asparagine glycosylation sites follow: asparagine 84 and asparagine 97. Pro residues predominate over residues 111-120 (HPGPPPPSPS). N-linked (GlcNAc...) asparagine glycans are attached at residues asparagine 129, asparagine 134, asparagine 169, asparagine 218, asparagine 233, and asparagine 251. Cysteine 139 and cysteine 177 are oxidised to a cystine. Residues cysteine 249 and cysteine 286 are joined by a disulfide bond. The chain crosses the membrane as a helical span at residues 292-316 (LLLPLIIGLVLLGLLTLVLIAFCIT). At 317-326 (RRRQSTYQPL) the chain is on the cytoplasmic side.

This sequence belongs to the LAMP family. In terms of processing, N- and O-glycosylated. As to expression, expressed in tissue macrophages and to a lesser extent in dendritic cells.

It localises to the endosome membrane. It is found in the lysosome membrane. The protein resides in the cell membrane. In terms of biological role, could play a role in phagocytic activities of tissue macrophages, both in intracellular lysosomal metabolism and extracellular cell-cell and cell-pathogen interactions. Binds to tissue- and organ-specific lectins or selectins, allowing homing of macrophage subsets to particular sites. Rapid recirculation of CD68 from endosomes and lysosomes to the plasma membrane may allow macrophages to crawl over selectin-bearing substrates or other cells. This Mus musculus (Mouse) protein is Macrosialin (Cd68).